A 251-amino-acid polypeptide reads, in one-letter code: 1-(5-phosphoribosyl)-5-[(5-phosphoribosylamino)methylideneamino] imidazole-4-carboxamide isomerase (251 aa).

The Proton acceptor role is filled by Asp8. Residue Asp131 is the Proton donor of the active site.

This sequence belongs to the HisA/HisF family.

The protein resides in the cytoplasm. The catalysed reaction is 1-(5-phospho-beta-D-ribosyl)-5-[(5-phospho-beta-D-ribosylamino)methylideneamino]imidazole-4-carboxamide = 5-[(5-phospho-1-deoxy-D-ribulos-1-ylimino)methylamino]-1-(5-phospho-beta-D-ribosyl)imidazole-4-carboxamide. Its pathway is amino-acid biosynthesis; L-histidine biosynthesis; L-histidine from 5-phospho-alpha-D-ribose 1-diphosphate: step 4/9. In Azoarcus sp. (strain BH72), this protein is 1-(5-phosphoribosyl)-5-[(5-phosphoribosylamino)methylideneamino] imidazole-4-carboxamide isomerase.